A 405-amino-acid chain; its full sequence is Cytoplasmic tRNA 2-thiolation protein 2 (405 aa).

It belongs to the CTU2/NCS2 family.

The protein resides in the cytoplasm. It participates in tRNA modification; 5-methoxycarbonylmethyl-2-thiouridine-tRNA biosynthesis. In terms of biological role, plays a central role in 2-thiolation of mcm(5)S(2)U at tRNA wobble positions of tRNA(Lys), tRNA(Glu) and tRNA(Gln). May act by forming a heterodimer with NCS6/CTU1 that ligates sulfur from thiocarboxylated URM1 onto the uridine of tRNAs at wobble position. This is Cytoplasmic tRNA 2-thiolation protein 2 from Drosophila melanogaster (Fruit fly).